The following is a 1164-amino-acid chain: Toxin subunit YenA1 (1164 aa).

The segment at 106–131 (RLEKSNSPLVPQTSSSTDASSESQTN) is disordered. Positions 118–130 (TSSSTDASSESQT) are enriched in low complexity.

Semipurified toxin complex consists of at least YenA1, YenA2, YenB, YenC1, YenC2, Chi1 and Chi2. The Yen-TC:K9 subcomplex is about 26 nm tall and 22 nm in diameter with 5-fold symmetry and 5 copies of YenA1, YenA2, Chi1 and Chi2; the chitinase subunits may be solvent accessible on the exterior the complex. The Yen-TC:K9 subcomplex has no insecticidal activity. The native complex with additional YenB, YenC1 and YenC2 subunits is 16 nm taller and is insecticidal; the toxicity-conferring subunits are present at about 1 copy each.

It localises to the secreted. Toxin complex is secreted when grown at 25 degrees Celsius or less; at higher temperatures the proteins are present intracellularly but not secreted. Its function is as follows. Part of an orally active toxin complex (TC) with strong insecticidal effects on larvae of the Coleoptera Costelytra zealandica, Acrossidius tasmania and Adoryphorus couloni and some Lepidoptera larvae. The TC has an endochitinase activity. In Yersinia entomophaga, this protein is Toxin subunit YenA1.